The primary structure comprises 70 residues: ATP synthase subunit c (70 aa).

2 consecutive transmembrane segments (helical) span residues 4-24 and 48-68; these read IAAG…NGML and ISMA…FVLI.

Belongs to the ATPase C chain family. F-type ATPases have 2 components, F(1) - the catalytic core - and F(0) - the membrane proton channel. F(1) has five subunits: alpha(3), beta(3), gamma(1), delta(1), epsilon(1). F(0) has three main subunits: a(1), b(2) and c(10-14). The alpha and beta chains form an alternating ring which encloses part of the gamma chain. F(1) is attached to F(0) by a central stalk formed by the gamma and epsilon chains, while a peripheral stalk is formed by the delta and b chains.

The protein localises to the cell membrane. Its function is as follows. F(1)F(0) ATP synthase produces ATP from ADP in the presence of a proton or sodium gradient. F-type ATPases consist of two structural domains, F(1) containing the extramembraneous catalytic core and F(0) containing the membrane proton channel, linked together by a central stalk and a peripheral stalk. During catalysis, ATP synthesis in the catalytic domain of F(1) is coupled via a rotary mechanism of the central stalk subunits to proton translocation. In terms of biological role, key component of the F(0) channel; it plays a direct role in translocation across the membrane. A homomeric c-ring of between 10-14 subunits forms the central stalk rotor element with the F(1) delta and epsilon subunits. The chain is ATP synthase subunit c from Oenococcus oeni (strain ATCC BAA-331 / PSU-1).